The primary structure comprises 150 residues: MNVILLDKIANLGNLGDQVAVKAGYARNYLLPQGKAVVANESNVKVFEARRAELEAKLAADLAAANQRAEKIAALEAVVIASKAGDEGKLFGSVGTRDIADAVTAAGVELAKAEVRLPLGALRTTGDFEVEVQLHTEVKAVVKVSVVAEA.

The protein belongs to the bacterial ribosomal protein bL9 family.

Binds to the 23S rRNA. The chain is Large ribosomal subunit protein bL9 from Shewanella sp. (strain MR-4).